Reading from the N-terminus, the 109-residue chain is Cell division protein ZapA (109 aa).

Residues 71–99 (KTRDYASNMEQRIRMLQQTIEQALLEQGR) are a coiled coil.

Belongs to the ZapA family. Type 1 subfamily. In terms of assembly, homodimer. Interacts with FtsZ.

It is found in the cytoplasm. In terms of biological role, activator of cell division through the inhibition of FtsZ GTPase activity, therefore promoting FtsZ assembly into bundles of protofilaments necessary for the formation of the division Z ring. It is recruited early at mid-cell but it is not essential for cell division. This is Cell division protein ZapA from Serratia proteamaculans (strain 568).